The following is a 399-amino-acid chain: S-adenosylmethionine synthase (399 aa).

His-17 serves as a coordination point for ATP. Residue Asp-19 coordinates Mg(2+). Glu-45 is a binding site for K(+). L-methionine is bound by residues Glu-58 and Gln-101. The flexible loop stretch occupies residues 101-111 (QSADIAMGVDQ). Residues 177–179 (DGK), 244–245 (RF), Asp-253, 259–260 (RK), Ala-276, and Lys-280 each bind ATP. Residue Asp-253 coordinates L-methionine. Lys-284 lines the L-methionine pocket.

The protein belongs to the AdoMet synthase family. Homotetramer; dimer of dimers. Mg(2+) serves as cofactor. The cofactor is K(+).

It localises to the cytoplasm. The enzyme catalyses L-methionine + ATP + H2O = S-adenosyl-L-methionine + phosphate + diphosphate. It functions in the pathway amino-acid biosynthesis; S-adenosyl-L-methionine biosynthesis; S-adenosyl-L-methionine from L-methionine: step 1/1. Its function is as follows. Catalyzes the formation of S-adenosylmethionine (AdoMet) from methionine and ATP. The overall synthetic reaction is composed of two sequential steps, AdoMet formation and the subsequent tripolyphosphate hydrolysis which occurs prior to release of AdoMet from the enzyme. This chain is S-adenosylmethionine synthase, found in Bacillus thuringiensis (strain Al Hakam).